Here is a 493-residue protein sequence, read N- to C-terminus: Aluminum-activated malate transporter 1 (493 aa).

The next 5 membrane-spanning stretches (helical) occupy residues 28–48 (VGLA…GPFT), 51–71 (FGIN…FSVG), 104–124 (TVEP…STFV), 133–153 (KFDY…LSGF), and 169–189 (VVIG…VWAG). Phosphoserine is present on residues Ser-320 and Ser-327. A Phosphothreonine modification is found at Thr-385. Positions 441 to 452 (DNDRSNNVDDSR) are enriched in basic and acidic residues. The segment at 441–460 (DNDRSNNVDDSRGGSSQDSC) is disordered.

This sequence belongs to the aromatic acid exporter (TC 2.A.85) family. Post-translationally, phosphorylated. A reversible phosphorylation is required for activation. As to expression, expressed in roots, but not in shoots. Detected in the root apex in absence of aluminum stress and in root apices, the stele and endodermis of the elongating zone of primary and lateral roots after aluminum stress. Not expressed in cortical and epidermal cells.

The protein localises to the cell membrane. Its activity is regulated as follows. Activated by external aluminum. Its function is as follows. Malate transporter critical for aluminum tolerance. The STOP1 transcription factor is required for ALMT1 expression. This chain is Aluminum-activated malate transporter 1 (ALMT1), found in Arabidopsis thaliana (Mouse-ear cress).